The primary structure comprises 406 residues: Cysteine desulfurase (406 aa).

At lysine 226 the chain carries N6-(pyridoxal phosphate)lysine. The active-site Cysteine persulfide intermediate is cysteine 364.

This sequence belongs to the class-V pyridoxal-phosphate-dependent aminotransferase family. Csd subfamily. In terms of assembly, homodimer. Interacts with SufE and the SufBCD complex composed of SufB, SufC and SufD. The interaction with SufE is required to mediate the direct transfer of the sulfur atom from the S-sulfanylcysteine. Pyridoxal 5'-phosphate serves as cofactor.

The protein localises to the cytoplasm. The enzyme catalyses (sulfur carrier)-H + L-cysteine = (sulfur carrier)-SH + L-alanine. It carries out the reaction L-selenocysteine + AH2 = hydrogenselenide + L-alanine + A + H(+). It functions in the pathway cofactor biosynthesis; iron-sulfur cluster biosynthesis. Cysteine desulfurases mobilize the sulfur from L-cysteine to yield L-alanine, an essential step in sulfur metabolism for biosynthesis of a variety of sulfur-containing biomolecules. Component of the suf operon, which is activated and required under specific conditions such as oxidative stress and iron limitation. Acts as a potent selenocysteine lyase in vitro, that mobilizes selenium from L-selenocysteine. Selenocysteine lyase activity is however unsure in vivo. This Enterobacter sp. (strain 638) protein is Cysteine desulfurase.